The primary structure comprises 694 residues: Polyribonucleotide nucleotidyltransferase (694 aa).

Residues Asp485 and Asp491 each coordinate Mg(2+). The region spanning 552–611 is the KH domain; that stretch reads PRIETMQIKPNKIATVIGPGGKQIRQIIEEAGVQIDINDSGLVSISASSPQAIEKAKSII. The region spanning 621–689 is the S1 motif domain; it reads GKIYEGRVTS…EKGQYKLSHK (69 aa).

This sequence belongs to the polyribonucleotide nucleotidyltransferase family. The cofactor is Mg(2+).

It localises to the cytoplasm. The catalysed reaction is RNA(n+1) + phosphate = RNA(n) + a ribonucleoside 5'-diphosphate. In terms of biological role, involved in mRNA degradation. Catalyzes the phosphorolysis of single-stranded polyribonucleotides processively in the 3'- to 5'-direction. In Chlamydia felis (strain Fe/C-56) (Chlamydophila felis), this protein is Polyribonucleotide nucleotidyltransferase.